The sequence spans 474 residues: tRNA-2-methylthio-N(6)-dimethylallyladenosine synthase (474 aa).

Residues 3–120 (KKLHIKTWGC…LPEMINAVRG (118 aa)) enclose the MTTase N-terminal domain. Residues Cys12, Cys49, Cys83, Cys157, Cys161, and Cys164 each contribute to the [4Fe-4S] cluster site. One can recognise a Radical SAM core domain in the interval 143–375 (RADGPTAFVS…QERINQQAMA (233 aa)). One can recognise a TRAM domain in the interval 378–441 (RRMLGTVQRI…TNSLRGKIVR (64 aa)).

This sequence belongs to the methylthiotransferase family. MiaB subfamily. In terms of assembly, monomer. [4Fe-4S] cluster is required as a cofactor.

Its subcellular location is the cytoplasm. It carries out the reaction N(6)-dimethylallyladenosine(37) in tRNA + (sulfur carrier)-SH + AH2 + 2 S-adenosyl-L-methionine = 2-methylsulfanyl-N(6)-dimethylallyladenosine(37) in tRNA + (sulfur carrier)-H + 5'-deoxyadenosine + L-methionine + A + S-adenosyl-L-homocysteine + 2 H(+). Its function is as follows. Catalyzes the methylthiolation of N6-(dimethylallyl)adenosine (i(6)A), leading to the formation of 2-methylthio-N6-(dimethylallyl)adenosine (ms(2)i(6)A) at position 37 in tRNAs that read codons beginning with uridine. This is tRNA-2-methylthio-N(6)-dimethylallyladenosine synthase from Klebsiella pneumoniae (strain 342).